A 366-amino-acid polypeptide reads, in one-letter code: Zinc finger CCCH domain-containing protein 11 (366 aa).

The tract at residues Leu43–Lys66 is disordered. Positions Thr54–Ala79 form a coiled coil. 2 C3H1-type zinc fingers span residues Asp90–Asn117 and Lys160–Pro198. The stretch at Lys208–Thr234 forms a coiled coil. Residues Tyr293–Leu338 form a disordered region. The span at Glu312 to Gly321 shows a compositional bias: polar residues. Positions Glu325–Leu338 are enriched in acidic residues.

The chain is Zinc finger CCCH domain-containing protein 11 from Oryza sativa subsp. japonica (Rice).